A 251-amino-acid chain; its full sequence is Retinoic acid early-inducible protein 1-epsilon (251 aa).

An N-terminal signal peptide occupies residues 1–28; sequence MAKAAVTKRHHFMIQKLLILLSYGYTNG. Cys37 and Cys56 are joined by a disulfide. Asn38, Asn70, Asn83, Asn141, and Asn154 each carry an N-linked (GlcNAc...) asparagine glycan. Cys88 and Cys188 are disulfide-bonded. The disordered stretch occupies residues 196-228; sequence LKQSKEKPRSTSRSPSITQLTSTSPLPPPSHST. Over residues 209–219 the composition is skewed to low complexity; that stretch reads SPSITQLTSTS. The GPI-anchor amidated serine moiety is linked to residue Ser225. A propeptide spans 226 to 251 (removed in mature form); that stretch reads HSTSKKGFISVGLIFISLLFAFAFAM.

It belongs to the NKG2D ligand family. In terms of processing, glycosylated.

The protein resides in the cell membrane. Acts as a ligand for KLRK1. This Mus musculus (Mouse) protein is Retinoic acid early-inducible protein 1-epsilon (Raet1e).